Here is a 103-residue protein sequence, read N- to C-terminus: NADH-quinone oxidoreductase subunit K (103 aa).

A run of 3 helical transmembrane segments spans residues 5 to 25, 32 to 52, and 66 to 86; these read VPTSYYLALSGVLFALGLIGV, ILIFLSVELMLNAANIALVAF, and FIVMTLAAAEVAIGLAIIVAI.

This sequence belongs to the complex I subunit 4L family. In terms of assembly, NDH-1 is composed of 15 different subunits. Subunits NuoA, H, J, K, L, M, N constitute the membrane sector of the complex.

The protein resides in the cell membrane. The catalysed reaction is a quinone + NADH + 5 H(+)(in) = a quinol + NAD(+) + 4 H(+)(out). NDH-1 shuttles electrons from NADH, via FMN and iron-sulfur (Fe-S) centers, to quinones in the respiratory chain. The immediate electron acceptor for the enzyme in this species is believed to be a menaquinone. Couples the redox reaction to proton translocation (for every two electrons transferred, four hydrogen ions are translocated across the cytoplasmic membrane), and thus conserves the redox energy in a proton gradient. This is NADH-quinone oxidoreductase subunit K from Deinococcus radiodurans (strain ATCC 13939 / DSM 20539 / JCM 16871 / CCUG 27074 / LMG 4051 / NBRC 15346 / NCIMB 9279 / VKM B-1422 / R1).